We begin with the raw amino-acid sequence, 623 residues long: MVSSDFENEKQPDVVQVLTDEKNISLDDKYDYEDPKNYSTNYVDDYNPKGLRRPTPQESKSLRRVIGNIRYSTFMLCICEFAERASYYSTTGILTNYIQRRIDPDSPHGWGAPPPGSPDASAGALGKGLQAASALTNLLTFLAYVFPLIGGYLGDSTIGRWKAIQWGVFFGFVAHLFFIFASIPQAIENANAGLGLCVIAIITLSAGSGLMKPNLLPLVLDQYPEERDMVKVLPTGESIILDREKSLSRITNVFYLAINIGAFLQIATSYCERRVGFWLAFFVPMILYIIVPIFLFIVKPKLKIKPPQGQVMTNVVKILAVLFSGNFIKRLWNGTFWDHARPSHMEARGTIYYNSKKKSAITWSDQWILDIKQTFDSCKIFLYYIIFNLADSGLGSVETSLIGAMKLDGVPNDLFNNFNPLTIIILIPILEYGLYPLLNKFKIDFKPIWRICFGFVVCSFSQIAGFVLQKQVYEQSPCGYYATNCDSPAPITAWKASSLFILAAAGECWAYTTAYELAYTRSPPALKSLVYALFLVMSAFSAALSLAITPALKDPNLHWVFLAIGLAGFLCAIVMLAQFWNLDKWMENETNERERLDREEEEEANRGIHDVDHPIEAIVSIKS.

Disordered stretches follow at residues 1 to 20 (MVSS…VLTD) and 31 to 58 (DYED…TPQE). The next 11 helical transmembrane spans lie at 134–154 (ALTN…GYLG), 163–183 (AIQW…FASI), 191–211 (NAGL…SGLM), 250–270 (ITNV…ATSY), 277–297 (FWLA…FLFI), 385–405 (IIFN…IGAM), 418–438 (FNPL…YPLL), 448–468 (IWRI…GFVL), 499–519 (LFIL…ELAY), 529–549 (LVYA…LAIT), and 557–577 (LHWV…VMLA).

Belongs to the major facilitator superfamily. Proton-dependent oligopeptide transporter (POT/PTR) (TC 2.A.17) family.

The protein resides in the membrane. In terms of biological role, uptake of small peptides. This chain is Peptide transporter PTR2 (PTR2), found in Candida albicans (Yeast).